Consider the following 146-residue polypeptide: VHLTDAEKAAVSGLWSKVNVDEIGGEALGRLLVVYPWTQRFFDSFGDLSSPSAVMSNPKVKAHGKKVLNSFSEGLKHLDNLKGTFSSLSELHCDKLHVDPENFKLLGNVIVVVLAHHLGKDFTPAAQAAFQKVVAGVATALAHKYH.

Valine 1 carries the post-translational modification N-acetylvaline. Residues 2 to 146 form the Globin domain; that stretch reads HLTDAEKAAV…VATALAHKYH (145 aa). Serine 44 is modified (phosphoserine). At lysine 59 the chain carries N6-acetyllysine. Histidine 63 serves as a coordination point for heme b. Position 82 is an N6-acetyllysine (lysine 82). Residue histidine 92 coordinates heme b. An S-nitrosocysteine modification is found at cysteine 93. Lysine 144 bears the N6-acetyllysine mark.

This sequence belongs to the globin family. In terms of assembly, heterotetramer of two alpha chains and two beta chains. Red blood cells.

In terms of biological role, involved in oxygen transport from the lung to the various peripheral tissues. In Spalax ehrenbergi (Middle East blind mole rat), this protein is Hemoglobin subunit beta (HBB).